The sequence spans 177 residues: Transcription termination/antitermination protein NusG (177 aa).

In terms of domain architecture, KOW spans 126 to 156 (PGETVRVIDGPFADFNGVVEEVNYEKSRIQV).

Belongs to the NusG family.

Functionally, participates in transcription elongation, termination and antitermination. This is Transcription termination/antitermination protein NusG from Pseudomonas aeruginosa (strain ATCC 15692 / DSM 22644 / CIP 104116 / JCM 14847 / LMG 12228 / 1C / PRS 101 / PAO1).